The chain runs to 704 residues: DNA ligase (704 aa).

Residues 58 to 62 (DYEYD), 107 to 108 (SL), and E138 contribute to the NAD(+) site. Catalysis depends on K140, which acts as the N6-AMP-lysine intermediate. Residues R161, E199, K323, and K347 each contribute to the NAD(+) site. Zn(2+)-binding residues include C441, C444, C459, and C464. Positions 621-704 (EKKGKLAGLN…LKLIGGENTE (84 aa)) constitute a BRCT domain.

This sequence belongs to the NAD-dependent DNA ligase family. LigA subfamily. It depends on Mg(2+) as a cofactor. The cofactor is Mn(2+).

The enzyme catalyses NAD(+) + (deoxyribonucleotide)n-3'-hydroxyl + 5'-phospho-(deoxyribonucleotide)m = (deoxyribonucleotide)n+m + AMP + beta-nicotinamide D-nucleotide.. Functionally, DNA ligase that catalyzes the formation of phosphodiester linkages between 5'-phosphoryl and 3'-hydroxyl groups in double-stranded DNA using NAD as a coenzyme and as the energy source for the reaction. It is essential for DNA replication and repair of damaged DNA. This is DNA ligase from Sulfurihydrogenibium sp. (strain YO3AOP1).